The sequence spans 237 residues: Leucyl/phenylalanyl-tRNA--protein transferase (237 aa).

It belongs to the L/F-transferase family.

The protein localises to the cytoplasm. The catalysed reaction is N-terminal L-lysyl-[protein] + L-leucyl-tRNA(Leu) = N-terminal L-leucyl-L-lysyl-[protein] + tRNA(Leu) + H(+). It carries out the reaction N-terminal L-arginyl-[protein] + L-leucyl-tRNA(Leu) = N-terminal L-leucyl-L-arginyl-[protein] + tRNA(Leu) + H(+). It catalyses the reaction L-phenylalanyl-tRNA(Phe) + an N-terminal L-alpha-aminoacyl-[protein] = an N-terminal L-phenylalanyl-L-alpha-aminoacyl-[protein] + tRNA(Phe). In terms of biological role, functions in the N-end rule pathway of protein degradation where it conjugates Leu, Phe and, less efficiently, Met from aminoacyl-tRNAs to the N-termini of proteins containing an N-terminal arginine or lysine. This chain is Leucyl/phenylalanyl-tRNA--protein transferase, found in Shewanella baltica (strain OS195).